The primary structure comprises 39 residues: Photosystem II reaction center protein X (39 aa).

A helical membrane pass occupies residues 11–31 (SLLWGAIVVVIPLSAALLFIS).

The protein belongs to the PsbX family. Type 1 subfamily. In terms of assembly, PSII is composed of 1 copy each of membrane proteins PsbA, PsbB, PsbC, PsbD, PsbE, PsbF, PsbH, PsbI, PsbJ, PsbK, PsbL, PsbM, PsbT, PsbX, PsbY, PsbZ, Psb30/Ycf12, at least 3 peripheral proteins of the oxygen-evolving complex and a large number of cofactors. It forms dimeric complexes.

It localises to the plastid. The protein resides in the cyanelle thylakoid membrane. Its function is as follows. Involved in the binding and/or turnover of quinones at the Q(B) site of photosystem II (PSII). PSII is a light-driven water plastoquinone oxidoreductase, using light energy to abstract electrons from H(2)O, generating a proton gradient subsequently used for ATP formation. The polypeptide is Photosystem II reaction center protein X (Cyanophora paradoxa).